A 528-amino-acid chain; its full sequence is Cytochrome P450 1A5 (528 aa).

Position 467 (cysteine 467) interacts with heme.

It belongs to the cytochrome P450 family. Heme is required as a cofactor.

It localises to the endoplasmic reticulum membrane. The protein resides in the microsome membrane. It carries out the reaction an organic molecule + reduced [NADPH--hemoprotein reductase] + O2 = an alcohol + oxidized [NADPH--hemoprotein reductase] + H2O + H(+). In terms of biological role, cytochromes P450 are a group of heme-thiolate monooxygenases. In liver microsomes, this enzyme is involved in an NADPH-dependent electron transport pathway. It oxidizes a variety of structurally unrelated compounds, including steroids, fatty acids, and xenobiotics. The chain is Cytochrome P450 1A5 (CYP1A5) from Gallus gallus (Chicken).